A 188-amino-acid polypeptide reads, in one-letter code: Elongation factor P (188 aa).

Belongs to the elongation factor P family.

The protein localises to the cytoplasm. It functions in the pathway protein biosynthesis; polypeptide chain elongation. In terms of biological role, involved in peptide bond synthesis. Stimulates efficient translation and peptide-bond synthesis on native or reconstituted 70S ribosomes in vitro. Probably functions indirectly by altering the affinity of the ribosome for aminoacyl-tRNA, thus increasing their reactivity as acceptors for peptidyl transferase. This is Elongation factor P from Christiangramia forsetii (strain DSM 17595 / CGMCC 1.15422 / KT0803) (Gramella forsetii).